The sequence spans 127 residues: MARVKRSVNAKKKRRAILKSAKGYRGQRSRLYRKAKEQWLHSMTYAYRDRRARKSEFRKLWIQRINAAARMNDITYNRLIHGLRLAEIEVDRKILAELAVNDFEAFSALCEAAKAALPEDVNAPKAA.

Belongs to the bacterial ribosomal protein bL20 family.

Binds directly to 23S ribosomal RNA and is necessary for the in vitro assembly process of the 50S ribosomal subunit. It is not involved in the protein synthesizing functions of that subunit. This Corynebacterium aurimucosum (strain ATCC 700975 / DSM 44827 / CIP 107346 / CN-1) (Corynebacterium nigricans) protein is Large ribosomal subunit protein bL20.